Here is a 192-residue protein sequence, read N- to C-terminus: Phosphoheptose isomerase (192 aa).

The SIS domain occupies 37–192 (LADSFKAGGK…IQLIEKEMAK (156 aa)). Residue 52–54 (NGG) participates in substrate binding. Positions 61 and 65 each coordinate Zn(2+). Residues glutamate 65, 93 to 94 (ND), 119 to 121 (STS), serine 124, and glutamine 172 each bind substrate. Residues glutamine 172 and histidine 180 each coordinate Zn(2+).

Belongs to the SIS family. GmhA subfamily. As to quaternary structure, homotetramer. Requires Zn(2+) as cofactor.

The protein localises to the cytoplasm. The enzyme catalyses 2 D-sedoheptulose 7-phosphate = D-glycero-alpha-D-manno-heptose 7-phosphate + D-glycero-beta-D-manno-heptose 7-phosphate. Its pathway is carbohydrate biosynthesis; D-glycero-D-manno-heptose 7-phosphate biosynthesis; D-glycero-alpha-D-manno-heptose 7-phosphate and D-glycero-beta-D-manno-heptose 7-phosphate from sedoheptulose 7-phosphate: step 1/1. Catalyzes the isomerization of sedoheptulose 7-phosphate in D-glycero-D-manno-heptose 7-phosphate. This is Phosphoheptose isomerase from Escherichia fergusonii (strain ATCC 35469 / DSM 13698 / CCUG 18766 / IAM 14443 / JCM 21226 / LMG 7866 / NBRC 102419 / NCTC 12128 / CDC 0568-73).